A 1482-amino-acid chain; its full sequence is Chromosome partition protein MukB (1482 aa).

An ATP-binding site is contributed by 34 to 41 (GGNGAGKS). Coiled coils occupy residues 337-418 (LNLV…QYQQ), 444-472 (LDTY…QTAH), 509-601 (RHLA…TSHA), 781-805 (AARE…ATLS), 835-1116 (EAEI…AKAG), and 1210-1265 (EAIE…LQSV). The segment at 666–783 (PGGAEDARLN…SVPLFGRAAR (118 aa)) is flexible hinge. The disordered stretch occupies residues 1049-1077 (ADAGAEERARQRRDELHTRLSNNRSRRNQ). Basic and acidic residues predominate over residues 1051 to 1066 (AGAEERARQRRDELHT).

It belongs to the SMC family. MukB subfamily. Homodimerization via its hinge domain. Binds to DNA via its C-terminal region. Interacts, and probably forms a ternary complex, with MukE and MukF via its C-terminal region. The complex formation is stimulated by calcium or magnesium. Interacts with tubulin-related protein FtsZ.

It localises to the cytoplasm. The protein resides in the nucleoid. In terms of biological role, plays a central role in chromosome condensation, segregation and cell cycle progression. Functions as a homodimer, which is essential for chromosome partition. Involved in negative DNA supercoiling in vivo, and by this means organize and compact chromosomes. May achieve or facilitate chromosome segregation by condensation DNA from both sides of a centrally located replisome during cell division. The polypeptide is Chromosome partition protein MukB (Cronobacter sakazakii (strain ATCC BAA-894) (Enterobacter sakazakii)).